The following is a 117-amino-acid chain: Immunoglobulin lambda variable 7-46 (117 aa).

The N-terminal stretch at 1-19 is a signal peptide; sequence MAWTPLFLFLLTCCPGSNS. Positions 20-44 are framework-1; the sequence is QAVVTQEPSLTVSPGGTVTLTCGSS. Residues 20 to 117 enclose the Ig-like domain; that stretch reads QAVVTQEPSL…YCLLSYSGAR (98 aa). A disulfide bond links cysteine 41 and cysteine 109. Positions 45 to 53 are complementarity-determining-1; that stretch reads TGAVTSGHY. The segment at 54–70 is framework-2; the sequence is PYWFQQKPGQAPRTLIY. Residues 71 to 73 form a complementarity-determining-2 region; it reads DTS. Residues 74–109 are framework-3; it reads NKHSWTPARFSGSLLGGKAALTLLGAQPEDEAEYYC. The complementarity-determining-3 stretch occupies residues 110–117; that stretch reads LLSYSGAR.

Immunoglobulins are composed of two identical heavy chains and two identical light chains; disulfide-linked.

It localises to the secreted. The protein resides in the cell membrane. In terms of biological role, v region of the variable domain of immunoglobulin light chains that participates in the antigen recognition. Immunoglobulins, also known as antibodies, are membrane-bound or secreted glycoproteins produced by B lymphocytes. In the recognition phase of humoral immunity, the membrane-bound immunoglobulins serve as receptors which, upon binding of a specific antigen, trigger the clonal expansion and differentiation of B lymphocytes into immunoglobulins-secreting plasma cells. Secreted immunoglobulins mediate the effector phase of humoral immunity, which results in the elimination of bound antigens. The antigen binding site is formed by the variable domain of one heavy chain, together with that of its associated light chain. Thus, each immunoglobulin has two antigen binding sites with remarkable affinity for a particular antigen. The variable domains are assembled by a process called V-(D)-J rearrangement and can then be subjected to somatic hypermutations which, after exposure to antigen and selection, allow affinity maturation for a particular antigen. In Homo sapiens (Human), this protein is Immunoglobulin lambda variable 7-46.